Here is a 236-residue protein sequence, read N- to C-terminus: 7-cyano-7-deazaguanine synthase (236 aa).

12-22 serves as a coordination point for ATP; it reads FSGGQDSTTCL. Residues cysteine 200, cysteine 215, cysteine 218, and cysteine 221 each coordinate Zn(2+).

The protein belongs to the QueC family. It depends on Zn(2+) as a cofactor.

The catalysed reaction is 7-carboxy-7-deazaguanine + NH4(+) + ATP = 7-cyano-7-deazaguanine + ADP + phosphate + H2O + H(+). Its pathway is purine metabolism; 7-cyano-7-deazaguanine biosynthesis. In terms of biological role, catalyzes the ATP-dependent conversion of 7-carboxy-7-deazaguanine (CDG) to 7-cyano-7-deazaguanine (preQ(0)). The sequence is that of 7-cyano-7-deazaguanine synthase from Bradyrhizobium sp. (strain ORS 278).